A 198-amino-acid polypeptide reads, in one-letter code: Nucleoid occlusion factor SlmA (198 aa).

One can recognise an HTH tetR-type domain in the interval 10–70 (NRREEILQSL…SLIEFIEDSL (61 aa)). Residues 33–52 (TTAKLAASVGVSEAALYRHF) constitute a DNA-binding region (H-T-H motif). Residues 117 to 144 (EQDRLQGRINQLFERIEAQLRQVLREKR) are a coiled coil.

Belongs to the nucleoid occlusion factor SlmA family. In terms of assembly, homodimer. Interacts with FtsZ.

The protein resides in the cytoplasm. It localises to the nucleoid. In terms of biological role, required for nucleoid occlusion (NO) phenomenon, which prevents Z-ring formation and cell division over the nucleoid. Acts as a DNA-associated cell division inhibitor that binds simultaneously chromosomal DNA and FtsZ, and disrupts the assembly of FtsZ polymers. SlmA-DNA-binding sequences (SBS) are dispersed on non-Ter regions of the chromosome, preventing FtsZ polymerization at these regions. In Salmonella dublin (strain CT_02021853), this protein is Nucleoid occlusion factor SlmA.